The sequence spans 240 residues: Cysteine-rich venom protein triflin (240 aa).

The first 19 residues, 1–19 (MIAFIVLPILAAVLQQSSG), serve as a signal peptide directing secretion. Residues 39–166 (DLHNSLRRSV…KYSYFYVCQY (128 aa)) form the SCP domain. 8 disulfides stabilise this stretch: Cys75/Cys153, Cys92/Cys167, Cys148/Cys164, Cys186/Cys193, Cys189/Cys198, Cys202/Cys235, Cys211/Cys229, and Cys220/Cys233. Residues 202-235 (CTRENEFTNCDSLVQKSSCQDNYMKSKCPASCFC) enclose the ShKT domain.

It belongs to the CRISP family. As to quaternary structure, forms a stable, non-covalent complex with SSP-2. As to expression, expressed by the venom gland.

The protein localises to the secreted. In terms of biological role, blocks contraction of smooth muscle elicited by high potassium-induced depolarization. May target voltage-gated calcium channels (Cav) on smooth muscle. In Protobothrops flavoviridis (Habu), this protein is Cysteine-rich venom protein triflin.